Reading from the N-terminus, the 389-residue chain is Chalcone synthase 3 (389 aa).

Cys164 is an active-site residue.

The protein belongs to the thiolase-like superfamily. Chalcone/stilbene synthases family.

The catalysed reaction is (E)-4-coumaroyl-CoA + 3 malonyl-CoA + 3 H(+) = 2',4,4',6'-tetrahydroxychalcone + 3 CO2 + 4 CoA. It functions in the pathway secondary metabolite biosynthesis; flavonoid biosynthesis. Functionally, the primary product of this enzyme is 4,2',4',6'-tetrahydroxychalcone (also termed naringenin-chalcone or chalcone) which can under specific conditions spontaneously isomerize into naringenin. This Trifolium subterraneum (Subterranean clover) protein is Chalcone synthase 3 (CHS3).